Consider the following 1025-residue polypeptide: Multidrug resistance protein MdtC (1025 aa).

The next 12 membrane-spanning stretches (helical) occupy residues 3–23 (FFAL…AITL), 333–353 (EVEQ…FLFL), 360–380 (IIPA…MYLC), 387–407 (LSLM…IVVL), 431–451 (VGFT…PLLL), 463–483 (FAVT…TLTP), 528–548 (LVGV…ISIP), 853–873 (VILI…LYES), 875–895 (VHPL…LLAL), 897–917 (LFNA…IGIV), 953–973 (PIMM…LSGG), and 984–1004 (ITIV…TPVV).

This sequence belongs to the resistance-nodulation-cell division (RND) (TC 2.A.6) family. MdtC subfamily. In terms of assembly, part of a tripartite efflux system composed of MdtA, MdtB and MdtC. MdtC forms a heteromultimer with MdtB.

The protein resides in the cell inner membrane. Functionally, the MdtABC tripartite complex confers resistance against novobiocin and deoxycholate. The sequence is that of Multidrug resistance protein MdtC from Escherichia coli (strain ATCC 8739 / DSM 1576 / NBRC 3972 / NCIMB 8545 / WDCM 00012 / Crooks).